A 75-amino-acid chain; its full sequence is Small ribosomal subunit protein bS18 (75 aa).

The protein belongs to the bacterial ribosomal protein bS18 family. In terms of assembly, part of the 30S ribosomal subunit. Forms a tight heterodimer with protein bS6.

Binds as a heterodimer with protein bS6 to the central domain of the 16S rRNA, where it helps stabilize the platform of the 30S subunit. The protein is Small ribosomal subunit protein bS18 of Vibrio atlanticus (strain LGP32) (Vibrio splendidus (strain Mel32)).